We begin with the raw amino-acid sequence, 175 residues long: Large ribosomal subunit protein uL5 (175 aa).

This sequence belongs to the universal ribosomal protein uL5 family. Part of the 50S ribosomal subunit; contacts the 5S rRNA and probably tRNA. Forms a bridge to the 30S subunit in the 70S ribosome.

Its function is as follows. This is one of the proteins that bind and probably mediate the attachment of the 5S RNA into the large ribosomal subunit, where it forms part of the central protuberance. In the 70S ribosome it contacts protein S13 of the 30S subunit (bridge B1b), connecting the 2 subunits; this bridge is implicated in subunit movement. May contact the P site tRNA; the 5S rRNA and some of its associated proteins might help stabilize positioning of ribosome-bound tRNAs. The protein is Large ribosomal subunit protein uL5 of Halobacterium salinarum (strain ATCC 29341 / DSM 671 / R1).